The sequence spans 393 residues: NAD(P)H-quinone oxidoreductase subunit H, chloroplastic (393 aa).

Belongs to the complex I 49 kDa subunit family. NDH is composed of at least 16 different subunits, 5 of which are encoded in the nucleus.

It localises to the plastid. The protein resides in the chloroplast thylakoid membrane. It catalyses the reaction a plastoquinone + NADH + (n+1) H(+)(in) = a plastoquinol + NAD(+) + n H(+)(out). It carries out the reaction a plastoquinone + NADPH + (n+1) H(+)(in) = a plastoquinol + NADP(+) + n H(+)(out). In terms of biological role, NDH shuttles electrons from NAD(P)H:plastoquinone, via FMN and iron-sulfur (Fe-S) centers, to quinones in the photosynthetic chain and possibly in a chloroplast respiratory chain. The immediate electron acceptor for the enzyme in this species is believed to be plastoquinone. Couples the redox reaction to proton translocation, and thus conserves the redox energy in a proton gradient. In Trifolium subterraneum (Subterranean clover), this protein is NAD(P)H-quinone oxidoreductase subunit H, chloroplastic.